Consider the following 415-residue polypeptide: uncharacterized protein (415 aa).

A TRAM domain is found at 1 to 52 (MQDLTINAIGAQGDGLARTADGKPAFVPLTLPGEVVRAKMDGARGEVVEILA). [4Fe-4S] cluster contacts are provided by C62, C68, C71, and C147. S-adenosyl-L-methionine-binding residues include Q252, Y279, E299, and D347. C373 functions as the Nucleophile in the catalytic mechanism.

The protein belongs to the class I-like SAM-binding methyltransferase superfamily. RNA M5U methyltransferase family.

This is an uncharacterized protein from Caulobacter vibrioides (strain ATCC 19089 / CIP 103742 / CB 15) (Caulobacter crescentus).